The primary structure comprises 214 residues: Ras-like protein rasZ (214 aa).

Residue 16-23 (GDGGVGKT) participates in GTP binding. An Effector region motif is present at residues 38-46 (YDPTIEDSY). GTP contacts are provided by residues 63–67 (DTAGQ) and 122–125 (NKSD). Cys-211 carries the post-translational modification Cysteine methyl ester. A lipid anchor (S-geranylgeranyl cysteine) is attached at Cys-211. Residues 212–214 (KMM) constitute a propeptide, removed in mature form.

The protein belongs to the small GTPase superfamily. Ras family.

It localises to the cell membrane. The catalysed reaction is GTP + H2O = GDP + phosphate + H(+). Functionally, ras proteins bind GDP/GTP and possess intrinsic GTPase activity. The chain is Ras-like protein rasZ (rasZ) from Dictyostelium discoideum (Social amoeba).